Reading from the N-terminus, the 63-residue chain is ATP synthase membrane subunit K, mitochondrial (63 aa).

A helical membrane pass occupies residues 15–37 (TMRGRANVAKATWASLGLVYVLV).

As to quaternary structure, F-type ATPases have 2 components, CF(1) - the catalytic core - and CF(0) - the membrane proton channel. CF(1) has five subunits: alpha(3), beta(3), gamma(1), delta(1), epsilon(1). CF(0) has three main subunits: a, b and c. The ATP synthase complex/complex V exists as a monomeric and a dimeric supercomplex that helps shape mitochondrial cristae to optimize proton flow.

It is found in the mitochondrion membrane. Functionally, mitochondrial membrane ATP synthase (F(1)F(0) ATP synthase or Complex V) produces ATP from ADP in the presence of a proton gradient across the membrane which is generated by electron transport complexes of the respiratory chain. F-type ATPases consist of two structural domains, F(1) - containing the extramembraneous catalytic core and F(0) - containing the membrane proton channel, linked together by a central stalk and a peripheral stalk. During catalysis, ATP synthesis in the catalytic domain of F(1) is coupled via a rotary mechanism of the central stalk subunits to proton translocation. ATP5MK is a minor subunit of the mitochondrial membrane ATP synthase required for dimerization of the ATP synthase complex and as such regulates ATP synthesis in the mitochondria. In Drosophila melanogaster (Fruit fly), this protein is ATP synthase membrane subunit K, mitochondrial.